Consider the following 488-residue polypeptide: Phenylalanine--tRNA ligase alpha subunit (488 aa).

Residues threonine 332, 371–373 (QLD), and phenylalanine 410 each bind L-phenylalanine. Glutamate 412 serves as a coordination point for Mg(2+). Phenylalanine 435 lines the L-phenylalanine pocket.

Belongs to the class-II aminoacyl-tRNA synthetase family. Phe-tRNA synthetase alpha subunit type 2 subfamily. Tetramer of two alpha and two beta subunits. Mg(2+) serves as cofactor.

Its subcellular location is the cytoplasm. The enzyme catalyses tRNA(Phe) + L-phenylalanine + ATP = L-phenylalanyl-tRNA(Phe) + AMP + diphosphate + H(+). In Aeropyrum pernix (strain ATCC 700893 / DSM 11879 / JCM 9820 / NBRC 100138 / K1), this protein is Phenylalanine--tRNA ligase alpha subunit.